The following is a 224-amino-acid chain: Thymidine kinase, cytosolic (224 aa).

A Phosphoserine modification is found at Ser13. Residues 26 to 33, 58 to 60, and 98 to 101 contribute to the ATP site; these read GPMFSGKS, DTR, and DEGQ. Glu99 serves as the catalytic Proton acceptor. Phe129 contributes to the substrate binding site. Zn(2+) contacts are provided by Cys154 and Cys157. Residues 173-177 and Tyr182 each bind substrate; that span reads VEVIG. Residues Cys186 and Cys189 each contribute to the Zn(2+) site. A KEN box motif is present at residues 203-205; the sequence is KEN.

This sequence belongs to the thymidine kinase family. In terms of assembly, homotetramer. Tetramerization from dimerization is induced by ATP and increases catalytic efficiency due to a high affinity for thymidine. Tetramerization is inhibited by phosphorylation at Ser-13. Interacts (via the KEN box) with FZR1. Post-translationally, phosphorylated on Ser-13 in mitosis. Phosphorylation of Ser-13 by CDK1 during mitosis reduces homotetramerization and catalytic efficiency when DNA replication is complete and intracellular TK1 is still present at a high level. Polyubiquitinated. Postmitosis, ubiquitination leads to proteasomal degradation. The KEN box sequence located at the C-terminal region targets for degradation by the anaphase promoting complex (APC/C) activated and rate-limited by FZR1.

The protein resides in the cytoplasm. The catalysed reaction is thymidine + ATP = dTMP + ADP + H(+). In terms of biological role, cell-cycle-regulated enzyme of importance in nucleotide metabolism. Catalyzes the first enzymatic step in the salvage pathway converting thymidine into thymidine monophosphate. Transcriptional regulation limits expression to the S phase of the cell cycle and transient expression coincides with the oscillation in the intracellular dTTP concentration. The polypeptide is Thymidine kinase, cytosolic (TK1) (Gallus gallus (Chicken)).